A 553-amino-acid chain; its full sequence is Expansin-like protein 7 (553 aa).

An N-terminal signal peptide occupies residues 1-19 (MRLLGSLILTLSLIASAFS). A glycan (N-linked (GlcNAc...) asparagine) is linked at N39. The region spanning 41-139 (SGSCEYGAYN…RKVSCDASGP (99 aa)) is the Expansin-like EG45 domain. Cystine bridges form between C44/C73 and C76/C134. N276, N325, and N406 each carry an N-linked (GlcNAc...) asparagine glycan. Disordered regions lie at residues 421–447 (GGSG…SSTA) and 460–531 (SSSA…DEHH). 2 stretches are compositionally biased toward low complexity: residues 460-476 (SSSA…AGGK) and 484-493 (ISTSGITGSG). Positions 497-516 (AASTSKTTSNPTGKTTGMTG) are enriched in polar residues. A compositionally biased stretch (basic and acidic residues) spans 520-531 (DHSESHSSDEHH).

The protein belongs to the expansin family. Expansin A subfamily.

The protein localises to the secreted. In terms of biological role, may serve to lubricate the movement of the cellulose microfibrils during cell growth and wall extension and/or may serve to maintain the fluid state of the slug cell wall. Overexpression shows aberrant stalk formation. The polypeptide is Expansin-like protein 7 (expl7) (Dictyostelium discoideum (Social amoeba)).